The following is a 468-amino-acid chain: Glutamate--tRNA ligase 2 (468 aa).

The 'HIGH' region motif lies at 9–19 (PSPTGFLHIGG). A 'KMSKS' region motif is present at residues 238 to 242 (KLSKR). K241 is a binding site for ATP.

Belongs to the class-I aminoacyl-tRNA synthetase family. Glutamate--tRNA ligase type 1 subfamily. Monomer.

The protein localises to the cytoplasm. It catalyses the reaction tRNA(Glu) + L-glutamate + ATP = L-glutamyl-tRNA(Glu) + AMP + diphosphate. Catalyzes the attachment of glutamate to tRNA(Glu) in a two-step reaction: glutamate is first activated by ATP to form Glu-AMP and then transferred to the acceptor end of tRNA(Glu). The chain is Glutamate--tRNA ligase 2 from Rhodospirillum centenum (strain ATCC 51521 / SW).